Consider the following 360-residue polypeptide: UDP-N-acetylglucosamine--N-acetylmuramyl-(pentapeptide) pyrophosphoryl-undecaprenol N-acetylglucosamine transferase (360 aa).

UDP-N-acetyl-alpha-D-glucosamine-binding positions include 12-14 (TAG), S198, and Q289.

The protein belongs to the glycosyltransferase 28 family. MurG subfamily.

Its subcellular location is the cell membrane. The catalysed reaction is Mur2Ac(oyl-L-Ala-gamma-D-Glu-L-Lys-D-Ala-D-Ala)-di-trans,octa-cis-undecaprenyl diphosphate + UDP-N-acetyl-alpha-D-glucosamine = beta-D-GlcNAc-(1-&gt;4)-Mur2Ac(oyl-L-Ala-gamma-D-Glu-L-Lys-D-Ala-D-Ala)-di-trans,octa-cis-undecaprenyl diphosphate + UDP + H(+). Its pathway is cell wall biogenesis; peptidoglycan biosynthesis. In terms of biological role, cell wall formation. Catalyzes the transfer of a GlcNAc subunit on undecaprenyl-pyrophosphoryl-MurNAc-pentapeptide (lipid intermediate I) to form undecaprenyl-pyrophosphoryl-MurNAc-(pentapeptide)GlcNAc (lipid intermediate II). The sequence is that of UDP-N-acetylglucosamine--N-acetylmuramyl-(pentapeptide) pyrophosphoryl-undecaprenol N-acetylglucosamine transferase from Streptococcus equi subsp. zooepidemicus (strain H70).